A 468-amino-acid chain; its full sequence is MITTRFAPSPTGFLHVGGVRTALFSWLYAKNNNGKFILRIEDTDLERSTQEAVDAILDGMSWLGLKNDGEIYYQTKRFDRYKEVIQELIADGKAYYCSCSKERLEELREYQQANNLKTGYDGKCRDANYIPQQGESYVVRFKNPQDGVVSWDDAVKGRISISNHELDDMIIQRADGSPTYNFCVVVDDIDMAITHIIRGDDHVNNTPKQINIYKALNANVPVFAHVPMILGPDGAKLSKRHGAVNVMQYREDGYLPQAILNYLVRLGWSHGDQEIFSIEEMIKAFNLEHINASPSRFDFEKLKWLNKHYIKESKFDDIQTEVEYHFAKTGLDISNGPDLKELVAVMAEKVDTLVELAEKSSYFYSDDISYDENAVKKHIKASTGEIFVKLLENFEALDAQQWQDPDVLHNIVSTTAEQCQVGMGKVGMPLRVAITGSGQSPDIGITLKLLGKNKVVARLTKALEELCK.

The 'HIGH' region motif lies at 8–18; the sequence is PSPTGFLHVGG. 4 residues coordinate Zn(2+): Cys97, Cys99, Cys124, and Asp126. The 'KMSKS' region motif lies at 236–240; sequence KLSKR. Residue Lys239 participates in ATP binding.

It belongs to the class-I aminoacyl-tRNA synthetase family. Glutamate--tRNA ligase type 1 subfamily. Monomer. The cofactor is Zn(2+).

It is found in the cytoplasm. The catalysed reaction is tRNA(Glu) + L-glutamate + ATP = L-glutamyl-tRNA(Glu) + AMP + diphosphate. Functionally, catalyzes the attachment of glutamate to tRNA(Glu) in a two-step reaction: glutamate is first activated by ATP to form Glu-AMP and then transferred to the acceptor end of tRNA(Glu). The polypeptide is Glutamate--tRNA ligase (Francisella tularensis subsp. mediasiatica (strain FSC147)).